The sequence spans 425 residues: Pectate lyase L (425 aa).

A signal peptide spans Met-1–Ala-25. Cys-28 and Cys-114 form a disulfide bridge. Positions 209, 233, 234, and 237 each coordinate Ca(2+). Lys-273 functions as the Proton acceptor in the catalytic mechanism. Asn-402, Ser-413, Ala-416, Asp-418, and Glu-423 together coordinate Ca(2+).

Belongs to the polysaccharide lyase 9 family. Requires Ca(2+) as cofactor.

It is found in the secreted. It carries out the reaction Eliminative cleavage of (1-&gt;4)-alpha-D-galacturonan to give oligosaccharides with 4-deoxy-alpha-D-galact-4-enuronosyl groups at their non-reducing ends.. It functions in the pathway glycan metabolism; pectin degradation; 2-dehydro-3-deoxy-D-gluconate from pectin: step 2/5. In terms of biological role, presents an endo-cleaving activity on polygalacturonate or partially methylated pectin. Is effective in the maceration of plant tissue, and has an important role in soft-rot disease. Is 280-fold less active against polygalacturonate than the major pectate lyase PelB. When assayed on polygalacturonate, PelL releases oligogalacturonates of different sizes; upon prolonged incubation, PelL degrades the primary products to unsaturated tetramer and pentamer in addition to unsaturated dimer and trimer. When assayed on oligogalacturonates (degrees of polymerization of 2 to 8), it preferentially forms unsaturated tetramer, and displays the highest activity on the octamer. In Dickeya dadantii (strain 3937) (Erwinia chrysanthemi (strain 3937)), this protein is Pectate lyase L (pelL).